The primary structure comprises 305 residues: MQLFIILCLAGSAVQLEGTELDGVERADNRRPIWNIAHMVNDKGLIDEYLDDGANSVESDVSFDSNGKPEKMLHGSPCDCGRSCKRQMSFADYLDYMRQLTTPGDPKFRENLILVMLDLKLKKLSSEQAYSAGQEVASQMLDKYWKRGESGARAYIVLSIPTITRVTFVNGFYDKLHSEGFDQYREKVGVDFSGNEDLEDTGKILKSRDILDHIWQSDGITNCLFRIMKRLKAAIRKRDSNGYMVKVYTWSVDKYTTMRKALRAGADGMITNFPKRLVSVLNEREFSGKFRLATYNDNPWERYTG.

A signal peptide spans 1–18; that stretch reads MQLFIILCLAGSAVQLEG. Residues 19-26 constitute a propeptide that is removed on maturation; that stretch reads TELDGVER. H38 is a catalytic residue. The Mg(2+) site is built by E58 and D60. H74 functions as the Nucleophile in the catalytic mechanism. Cystine bridges form between C78–C84 and C80–C223. D118 provides a ligand contact to Mg(2+).

The protein belongs to the arthropod phospholipase D family. Class II subfamily. Class IIb sub-subfamily. Requires Mg(2+) as cofactor. In terms of tissue distribution, expressed by the venom gland.

Its subcellular location is the secreted. The catalysed reaction is an N-(acyl)-sphingosylphosphocholine = an N-(acyl)-sphingosyl-1,3-cyclic phosphate + choline. It carries out the reaction an N-(acyl)-sphingosylphosphoethanolamine = an N-(acyl)-sphingosyl-1,3-cyclic phosphate + ethanolamine. It catalyses the reaction a 1-acyl-sn-glycero-3-phosphocholine = a 1-acyl-sn-glycero-2,3-cyclic phosphate + choline. The enzyme catalyses a 1-acyl-sn-glycero-3-phosphoethanolamine = a 1-acyl-sn-glycero-2,3-cyclic phosphate + ethanolamine. Functionally, dermonecrotic toxins cleave the phosphodiester linkage between the phosphate and headgroup of certain phospholipids (sphingolipid and lysolipid substrates), forming an alcohol (often choline) and a cyclic phosphate. This toxin acts on sphingomyelin (SM) with low activity. It may also act on ceramide phosphoethanolamine (CPE), lysophosphatidylcholine (LPC) and lysophosphatidylethanolamine (LPE), but not on lysophosphatidylserine (LPS), and lysophosphatidylglycerol (LPG). It acts by transphosphatidylation, releasing exclusively cyclic phosphate products as second products. Has no or weak activities in inducing dermonecrosis, hemolysis, inflammatory response, platelet aggregation and increase in vessel permeability. In vivo, shows no lethality when injected at higher dose into mice. The chain is Dermonecrotic toxin LiSicTox-betaID1 from Loxosceles intermedia (Brown spider).